We begin with the raw amino-acid sequence, 328 residues long: Tetraacyldisaccharide 4'-kinase (328 aa).

55-62 (TAGGNGKT) provides a ligand contact to ATP.

It belongs to the LpxK family.

It catalyses the reaction lipid A disaccharide (E. coli) + ATP = lipid IVA (E. coli) + ADP + H(+). The protein operates within glycolipid biosynthesis; lipid IV(A) biosynthesis; lipid IV(A) from (3R)-3-hydroxytetradecanoyl-[acyl-carrier-protein] and UDP-N-acetyl-alpha-D-glucosamine: step 6/6. Transfers the gamma-phosphate of ATP to the 4'-position of a tetraacyldisaccharide 1-phosphate intermediate (termed DS-1-P) to form tetraacyldisaccharide 1,4'-bis-phosphate (lipid IVA). In Escherichia coli (strain K12), this protein is Tetraacyldisaccharide 4'-kinase (lpxK).